The chain runs to 296 residues: MNELIAIVGPTAVGKTELAVAWAQRINGEIVSADSRQIYRKMNIGTAKPSATEQALAPHHLIDIRDPEQSFSLAEFQDLALAAIADIQARGHVPLLVGGTGQYLAAVLEGWQIPRVPPQPELRAELEQVALHEGPATLHARLAAVDPVAAARIPPTNVRRVIRALEVYLVSGEPISRLQERQPPPFRPRTIWLHRPRTELYARADARIERMIAAGLVDEVAELLAGGYDWSLPAMSSLGYIQFRPYFEGTADLTTCIERLRFDTHAFIRRQEMWFRRLPNLEIWTPDHPDWRAIIA.

9–16 contributes to the ATP binding site; that stretch reads GPTAVGKT. 11 to 16 is a binding site for substrate; the sequence is TAVGKT. The segment at 34–37 is interaction with substrate tRNA; the sequence is DSRQ.

This sequence belongs to the IPP transferase family. In terms of assembly, monomer. The cofactor is Mg(2+).

It catalyses the reaction adenosine(37) in tRNA + dimethylallyl diphosphate = N(6)-dimethylallyladenosine(37) in tRNA + diphosphate. Catalyzes the transfer of a dimethylallyl group onto the adenine at position 37 in tRNAs that read codons beginning with uridine, leading to the formation of N6-(dimethylallyl)adenosine (i(6)A). This chain is tRNA dimethylallyltransferase, found in Chloroflexus aggregans (strain MD-66 / DSM 9485).